The following is a 332-amino-acid chain: Probable thc operon regulatory protein (332 aa).

The 102-residue stretch at 227–328 (RLAVDYLEAH…GVSPSEDLRT (102 aa)) folds into the HTH araC/xylS-type domain. 2 consecutive DNA-binding regions (H-T-H motif) follow at residues 244–265 (AQVA…QNSL) and 295–318 (VTEI…KQTF).

Probably involved in the positive regulation of the thc operon for the degradation of the thiocarbamate herbicide EPTC. This chain is Probable thc operon regulatory protein (thcR), found in Rhodococcus erythropolis (Arthrobacter picolinophilus).